The chain runs to 124 residues: Mediator of RNA polymerase II transcription subunit 31 (124 aa).

It belongs to the Mediator complex subunit 31 family. Component of the Mediator complex.

The protein localises to the nucleus. In terms of biological role, component of the Mediator complex, a coactivator involved in the regulated transcription of nearly all RNA polymerase II-dependent genes. Mediator functions as a bridge to convey information from gene-specific regulatory proteins to the basal RNA polymerase II transcription machinery. Mediator is recruited to promoters by direct interactions with regulatory proteins and serves as a scaffold for the assembly of a functional preinitiation complex with RNA polymerase II and the general transcription factors. This Kluyveromyces lactis (strain ATCC 8585 / CBS 2359 / DSM 70799 / NBRC 1267 / NRRL Y-1140 / WM37) (Yeast) protein is Mediator of RNA polymerase II transcription subunit 31 (SOH1).